Reading from the N-terminus, the 438-residue chain is Malic acid transport protein (438 aa).

10 consecutive transmembrane segments (helical) span residues 37–57 (SWFA…SFPF), 65–85 (IGKI…SCML), 106–126 (LFIA…AIYA), 140–160 (ILYY…FFTI), 172–192 (SPAW…AGAV), 205–225 (VIFG…LFAV), 242–262 (PGMF…INIA), 288–308 (FMAI…MVSF), 321–341 (ACGW…TIEI), and 353–373 (FGHI…YLMV). The segment at 390–438 (AHPPPKPNTGVLNPTFPPEKAPASLEKVDTHVTSTGGESDPPSSEHESV) is disordered. Phosphoserine occurs at positions 413, 423, 428, 432, 433, and 437.

The protein belongs to the tellurite-resistance/dicarboxylate transporter (TDT) family.

The protein localises to the membrane. Functionally, permease for malate and other C4 dicarboxylic acids. This chain is Malic acid transport protein (mae1), found in Schizosaccharomyces pombe (strain 972 / ATCC 24843) (Fission yeast).